A 1150-amino-acid chain; its full sequence is ATP-dependent helicase/deoxyribonuclease subunit B (1150 aa).

Residue 8–15 (GRSGSGKS) participates in ATP binding. [4Fe-4S] cluster contacts are provided by C789, C1108, C1111, and C1117.

This sequence belongs to the helicase family. AddB/RexB type 1 subfamily. As to quaternary structure, heterodimer of AddA and AddB. It depends on Mg(2+) as a cofactor. The cofactor is [4Fe-4S] cluster.

In terms of biological role, the heterodimer acts as both an ATP-dependent DNA helicase and an ATP-dependent, dual-direction single-stranded exonuclease. Recognizes the chi site generating a DNA molecule suitable for the initiation of homologous recombination. The AddB subunit has 5' -&gt; 3' nuclease activity but not helicase activity. The polypeptide is ATP-dependent helicase/deoxyribonuclease subunit B (Clostridium tetani (strain Massachusetts / E88)).